Reading from the N-terminus, the 89-residue chain is Small ribosomal subunit protein uS15 (89 aa).

The span at 1–21 (MALTTEEKKQVLSEYGLHETD) shows a compositional bias: basic and acidic residues. The disordered stretch occupies residues 1-24 (MALTTEEKKQVLSEYGLHETDTGS).

This sequence belongs to the universal ribosomal protein uS15 family. Part of the 30S ribosomal subunit. Forms a bridge to the 50S subunit in the 70S ribosome, contacting the 23S rRNA.

In terms of biological role, one of the primary rRNA binding proteins, it binds directly to 16S rRNA where it helps nucleate assembly of the platform of the 30S subunit by binding and bridging several RNA helices of the 16S rRNA. Functionally, forms an intersubunit bridge (bridge B4) with the 23S rRNA of the 50S subunit in the ribosome. The sequence is that of Small ribosomal subunit protein uS15 from Rhodococcus opacus (strain B4).